A 98-amino-acid polypeptide reads, in one-letter code: Integration host factor subunit alpha (98 aa).

The tract at residues F52–I71 is disordered.

The protein belongs to the bacterial histone-like protein family. As to quaternary structure, heterodimer of an alpha and a beta chain.

This protein is one of the two subunits of integration host factor, a specific DNA-binding protein that functions in genetic recombination as well as in transcriptional and translational control. In Photorhabdus laumondii subsp. laumondii (strain DSM 15139 / CIP 105565 / TT01) (Photorhabdus luminescens subsp. laumondii), this protein is Integration host factor subunit alpha.